The following is an 87-amino-acid chain: HssA/B-like protein 31 (87 aa).

Belongs to the hssA/B family.

The sequence is that of HssA/B-like protein 31 (hssl31) from Dictyostelium discoideum (Social amoeba).